Reading from the N-terminus, the 144-residue chain is Galectin b (144 aa).

Residues Asp1–Val138 enclose the Galectin domain.

Its function is as follows. Lectin that binds beta-galactoside and a wide array of complex carbohydrates. This is Galectin b from Aplysina lactuca (Marine sponge).